We begin with the raw amino-acid sequence, 298 residues long: Elongation factor Ts (298 aa).

An involved in Mg(2+) ion dislocation from EF-Tu region spans residues 79 to 82 (TDFV).

It belongs to the EF-Ts family.

Its subcellular location is the cytoplasm. Its function is as follows. Associates with the EF-Tu.GDP complex and induces the exchange of GDP to GTP. It remains bound to the aminoacyl-tRNA.EF-Tu.GTP complex up to the GTP hydrolysis stage on the ribosome. The chain is Elongation factor Ts (tsf) from Mycoplasma pneumoniae (strain ATCC 29342 / M129 / Subtype 1) (Mycoplasmoides pneumoniae).